We begin with the raw amino-acid sequence, 254 residues long: Probable protein ABIL5 (254 aa).

Residues 1–26 are disordered; sequence MEVAEAGVDGVAGRRQQEEASGAAPF.

This sequence belongs to the ABI family. Binds SCAR.

The protein resides in the cytoplasm. It localises to the cytoskeleton. Involved in regulation of actin and microtubule organization. Part of a WAVE complex that activates the Arp2/3 complex. This Oryza sativa subsp. japonica (Rice) protein is Probable protein ABIL5.